We begin with the raw amino-acid sequence, 740 residues long: Putative Pol polyprotein from transposon element Bs1 (740 aa).

The stretch at 469 to 503 is one PPR repeat; it reads TAVAHNLLVQALFMDGRASDAYVVLEEMQNNGPFP.

In terms of biological role, bs1 is probably an active plant retrotransposon. The chain is Putative Pol polyprotein from transposon element Bs1 from Zea mays (Maize).